A 388-amino-acid chain; its full sequence is Putative nickel insertion protein (388 aa).

The protein belongs to the LarC family.

In Geobacter sulfurreducens (strain ATCC 51573 / DSM 12127 / PCA), this protein is Putative nickel insertion protein.